We begin with the raw amino-acid sequence, 157 residues long: Glutamyl-tRNA(Gln) amidotransferase subunit C, mitochondrial (157 aa).

This sequence belongs to the GatC family. In terms of assembly, subunit of the heterotrimeric GatCAB amidotransferase (AdT) complex, composed of A, B and C subunits.

Its subcellular location is the mitochondrion. It carries out the reaction L-glutamyl-tRNA(Gln) + L-glutamine + ATP + H2O = L-glutaminyl-tRNA(Gln) + L-glutamate + ADP + phosphate + H(+). In terms of biological role, allows the formation of correctly charged Gln-tRNA(Gln) through the transamidation of misacylated Glu-tRNA(Gln) in the mitochondria. The reaction takes place in the presence of glutamine and ATP through an activated gamma-phospho-Glu-tRNA(Gln). This chain is Glutamyl-tRNA(Gln) amidotransferase subunit C, mitochondrial, found in Drosophila virilis (Fruit fly).